A 221-amino-acid chain; its full sequence is Ribosomal RNA small subunit methyltransferase Nep1 (221 aa).

Residues Gly-174, Gly-179, and 196–201 (IGDETM) each bind S-adenosyl-L-methionine.

It belongs to the class IV-like SAM-binding methyltransferase superfamily. RNA methyltransferase NEP1 family. Homodimer.

It catalyses the reaction a pseudouridine in rRNA + S-adenosyl-L-methionine = an N(1)-methylpseudouridine in rRNA + S-adenosyl-L-homocysteine + H(+). Methyltransferase involved in ribosomal biogenesis. Specifically catalyzes the N1-methylation of the pseudouridine corresponding to position 914 in M.jannaschii 16S rRNA. This is Ribosomal RNA small subunit methyltransferase Nep1 from Pyrobaculum islandicum (strain DSM 4184 / JCM 9189 / GEO3).